A 330-amino-acid chain; its full sequence is Alpha/beta hydrolase domain-containing protein VTE7 (330 aa).

The 232-residue stretch at 84–315 (VVLLHCFDSS…GHLPHVENPK (232 aa)) folds into the AB hydrolase-1 domain. S157 (nucleophile) is an active-site residue. Residues D279 and H307 each act as charge relay system in the active site.

It belongs to the AB hydrolase superfamily.

It is found in the plastid. Its subcellular location is the chloroplast envelope. Functionally, hydrolase involved in tocopherol (vitamin E) biosynthesis. Releases prenyl alcohols from chlorophyll biosynthetic intermediates, which are then converted to the corresponding diphosphates for tocopherol biosynthesis. Provides most of the phytol from chlorophyll for tocopherol biosynthesis in seeds. This chain is Alpha/beta hydrolase domain-containing protein VTE7, found in Arabidopsis thaliana (Mouse-ear cress).